Reading from the N-terminus, the 84-residue chain is Small ribosomal subunit protein uS17 (84 aa).

The protein belongs to the universal ribosomal protein uS17 family. In terms of assembly, part of the 30S ribosomal subunit.

One of the primary rRNA binding proteins, it binds specifically to the 5'-end of 16S ribosomal RNA. This is Small ribosomal subunit protein uS17 from Borrelia recurrentis (strain A1).